The chain runs to 148 residues: Single-stranded DNA-binding protein, mitochondrial (148 aa).

The transit peptide at 1 to 16 (MFRRPALQVLRQFVRH) directs the protein to the mitochondrion. The SSB domain occupies 30–141 (LNRVQLLGRV…IIADNIVFLS (112 aa)). Residues serine 67 and serine 79 each carry the phosphoserine modification. At lysine 113 the chain carries N6-acetyllysine. The residue at position 122 (lysine 122) is an N6-succinyllysine.

In terms of assembly, homotetramer. Interacts with MPG/AAG, through inhibition of its glycosylase activity it potentially prevents formation of DNA breaks in ssDNA, ensuring that base removal primarily occurs in dsDNA. Interacts with POLDIP2. Interacts with PRIMPOL.

It is found in the mitochondrion. The protein resides in the mitochondrion matrix. The protein localises to the mitochondrion nucleoid. Functionally, binds preferentially and cooperatively to pyrimidine rich single-stranded DNA (ss-DNA). In vitro, required to maintain the copy number of mitochondrial DNA (mtDNA) and plays a crucial role during mtDNA replication by stimulating the activity of the replisome components POLG and TWNK at the replication fork. Promotes the activity of the gamma complex polymerase POLG, largely by organizing the template DNA and eliminating secondary structures to favor ss-DNA conformations that facilitate POLG activity. In addition it is able to promote the 5'-3' unwinding activity of the mtDNA helicase TWNK. May also function in mtDNA repair. The chain is Single-stranded DNA-binding protein, mitochondrial (SSBP1) from Oryctolagus cuniculus (Rabbit).